The primary structure comprises 86 residues: ATP synthase subunit c (86 aa).

2 helical membrane passes run 8 to 28 (VLGC…GPGI) and 64 to 84 (TTGL…PLLG).

This sequence belongs to the ATPase C chain family. As to quaternary structure, F-type ATPases have 2 components, F(1) - the catalytic core - and F(0) - the membrane proton channel. F(1) has five subunits: alpha(3), beta(3), gamma(1), delta(1), epsilon(1). F(0) has three main subunits: a(1), b(2) and c(10-14). The alpha and beta chains form an alternating ring which encloses part of the gamma chain. F(1) is attached to F(0) by a central stalk formed by the gamma and epsilon chains, while a peripheral stalk is formed by the delta and b chains.

Its subcellular location is the cell membrane. Functionally, f(1)F(0) ATP synthase produces ATP from ADP in the presence of a proton or sodium gradient. F-type ATPases consist of two structural domains, F(1) containing the extramembraneous catalytic core and F(0) containing the membrane proton channel, linked together by a central stalk and a peripheral stalk. During catalysis, ATP synthesis in the catalytic domain of F(1) is coupled via a rotary mechanism of the central stalk subunits to proton translocation. Key component of the F(0) channel; it plays a direct role in translocation across the membrane. A homomeric c-ring of between 10-14 subunits forms the central stalk rotor element with the F(1) delta and epsilon subunits. This chain is ATP synthase subunit c, found in Lachnoclostridium phytofermentans (strain ATCC 700394 / DSM 18823 / ISDg) (Clostridium phytofermentans).